A 180-amino-acid polypeptide reads, in one-letter code: Large ribosomal subunit protein uL5 (180 aa).

It belongs to the universal ribosomal protein uL5 family. In terms of assembly, part of the 50S ribosomal subunit; part of the 5S rRNA/L5/L18/L25 subcomplex. Contacts the 5S rRNA and the P site tRNA. Forms a bridge to the 30S subunit in the 70S ribosome.

Its function is as follows. This is one of the proteins that bind and probably mediate the attachment of the 5S RNA into the large ribosomal subunit, where it forms part of the central protuberance. In the 70S ribosome it contacts protein S13 of the 30S subunit (bridge B1b), connecting the 2 subunits; this bridge is implicated in subunit movement. Contacts the P site tRNA; the 5S rRNA and some of its associated proteins might help stabilize positioning of ribosome-bound tRNAs. The chain is Large ribosomal subunit protein uL5 from Lactobacillus acidophilus (strain ATCC 700396 / NCK56 / N2 / NCFM).